We begin with the raw amino-acid sequence, 1022 residues long: Translation initiation factor IF-2 (1022 aa).

The span at 82–94 shows a compositional bias: basic and acidic residues; the sequence is EQSRKTLEKEQHL. Disordered stretches follow at residues 82 to 129 and 342 to 436; these read EQSR…AVPA and SENK…QREL. Residues 104–115 show a composition bias toward low complexity; the sequence is ASKSSAKGSESA. The span at 375-384 shows a compositional bias: basic residues; the sequence is KAKKGKKKKK. Positions 421–436 are enriched in basic and acidic residues; that stretch reads SEREREQEEGAAQREL. Residues 519-689 enclose the tr-type G domain; that stretch reads TRPPVVTIMG…LTEAELRELK (171 aa). The interval 528–535 is G1; that stretch reads GHVDHGKT. Position 528–535 (528–535) interacts with GTP; sequence GHVDHGKT. The segment at 553–557 is G2; it reads GITQH. The G3 stretch occupies residues 575–578; it reads DTPG. GTP contacts are provided by residues 575–579 and 629–632; these read DTPGH and NKID. Residues 629–632 form a G4 region; that stretch reads NKID. Positions 665-667 are G5; it reads SAK.

It belongs to the TRAFAC class translation factor GTPase superfamily. Classic translation factor GTPase family. IF-2 subfamily.

The protein localises to the cytoplasm. In terms of biological role, one of the essential components for the initiation of protein synthesis. Protects formylmethionyl-tRNA from spontaneous hydrolysis and promotes its binding to the 30S ribosomal subunits. Also involved in the hydrolysis of GTP during the formation of the 70S ribosomal complex. In Chlorobium chlorochromatii (strain CaD3), this protein is Translation initiation factor IF-2.